The following is a 387-amino-acid chain: O-phospho-L-seryl-tRNA:Cys-tRNA synthase 2 (387 aa).

Pyridoxal 5'-phosphate-binding positions include 89-90 (AR), Asn-196, and 219-221 (SGH). Lys-222 bears the N6-(pyridoxal phosphate)lysine mark.

The protein belongs to the SepCysS family. Homodimer. Interacts with SepRS. It depends on pyridoxal 5'-phosphate as a cofactor.

The catalysed reaction is O-phospho-L-seryl-tRNA(Cys) + hydrogen sulfide + H(+) = L-cysteinyl-tRNA(Cys) + phosphate. In terms of biological role, converts O-phospho-L-seryl-tRNA(Cys) (Sep-tRNA(Cys)) to L-cysteinyl-tRNA(Cys) (Cys-tRNA(Cys)). The chain is O-phospho-L-seryl-tRNA:Cys-tRNA synthase 2 from Methanococcoides burtonii (strain DSM 6242 / NBRC 107633 / OCM 468 / ACE-M).